The chain runs to 370 residues: ABSCISIC ACID-INSENSITIVE 5-like protein 8 (370 aa).

Residues Ser-25, Ser-44, and Ser-69 each carry the phosphoserine modification. The tract at residues 56-77 (SAEETQEGSQRQGSTTLPPTLS) is disordered. A compositionally biased stretch (polar residues) spans 62–77 (EGSQRQGSTTLPPTLS). At Thr-111 the chain carries Phosphothreonine. A compositionally biased stretch (polar residues) spans 260 to 278 (ESSLLSPSPYISNGSTSTR). The segment at 260–281 (ESSLLSPSPYISNGSTSTRGGK) is disordered. Residues 293–356 (VDKKLRRKIK…MEPGMISLHE (64 aa)) form the bZIP domain. Positions 295–314 (KKLRRKIKNRESAARSRARK) are basic motif. The segment at 328 to 342 (LKKDYEELLKQHVEL) is leucine-zipper. The segment at 349–370 (PGMISLHERPERKLRRTKSDIK) is disordered. Over residues 354–370 (LHERPERKLRRTKSDIK) the composition is skewed to basic and acidic residues.

This sequence belongs to the bZIP family. ABI5 subfamily. DNA-binding heterodimer.

The protein localises to the nucleus. Could participate in abscisic acid-regulated gene expression. The sequence is that of ABSCISIC ACID-INSENSITIVE 5-like protein 8 (BZIP15) from Arabidopsis thaliana (Mouse-ear cress).